We begin with the raw amino-acid sequence, 203 residues long: GTP cyclohydrolase 1 (203 aa).

Residues Cys-87, His-90, and Cys-158 each coordinate Zn(2+).

This sequence belongs to the GTP cyclohydrolase I family. In terms of assembly, homomer.

The enzyme catalyses GTP + H2O = 7,8-dihydroneopterin 3'-triphosphate + formate + H(+). The protein operates within cofactor biosynthesis; 7,8-dihydroneopterin triphosphate biosynthesis; 7,8-dihydroneopterin triphosphate from GTP: step 1/1. In Xylella fastidiosa (strain M23), this protein is GTP cyclohydrolase 1.